A 474-amino-acid polypeptide reads, in one-letter code: uncharacterized protein (474 aa).

This is an uncharacterized protein from Magallana gigas (Pacific oyster).